The chain runs to 94 residues: Co-chaperonin GroES (94 aa).

This sequence belongs to the GroES chaperonin family. Heptamer of 7 subunits arranged in a ring. Interacts with the chaperonin GroEL.

It localises to the cytoplasm. In terms of biological role, together with the chaperonin GroEL, plays an essential role in assisting protein folding. The GroEL-GroES system forms a nano-cage that allows encapsulation of the non-native substrate proteins and provides a physical environment optimized to promote and accelerate protein folding. GroES binds to the apical surface of the GroEL ring, thereby capping the opening of the GroEL channel. The chain is Co-chaperonin GroES from Desulfitobacterium hafniense (strain DSM 10664 / DCB-2).